A 1397-amino-acid chain; its full sequence is Protein RhsC (1397 aa).

Tandem repeats lie at residues 330-352, 353-374, 375-417, 418-438, 439-460, 461-481, 482-502, 503-525, 526-546, 547-567, 568-588, 589-609, 610-629, 630-650, 651-671, 672-691, 692-711, 712-734, 735-758, 808-828, 829-850, 851-871, 872-894, 895-930, 931-959, 960-984, 985-1019, and 1162-1186. The 28 X approximate tandem repeats stretch occupies residues 330 to 1186; that stretch reads NTQVRSFTYD…LNEENPHQLQ (857 aa). Residues 1292–1312 form a disordered region; it reads GGQDQRGESKGDGLWGPGKAS.

Belongs to the RHS family.

Functionally, rhs elements have a nonessential function. They may play an important role in the natural ecology of the cell. The chain is Protein RhsC (rhsC) from Escherichia coli (strain K12).